We begin with the raw amino-acid sequence, 512 residues long: Serine/threonine-protein kinase grp (512 aa).

The Protein kinase domain maps to 22–279 (WTLAQTLGEG…LEKTLDHKWC (258 aa)). ATP contacts are provided by residues 28–36 (LGEGAYGEV) and K51. The Proton acceptor role is filled by D143. Residues 335 to 360 (PTMRSDDDFNVRLGSGRSKEDGGDRQ) are disordered.

The protein belongs to the protein kinase superfamily. CAMK Ser/Thr protein kinase family. NIM1 subfamily. Post-translationally, phosphorylated in a MEI-41/ATR dependent manner in response to DNA damage or the presence of unreplicated DNA.

Its subcellular location is the nucleus. The enzyme catalyses L-seryl-[protein] + ATP = O-phospho-L-seryl-[protein] + ADP + H(+). The catalysed reaction is L-threonyl-[protein] + ATP = O-phospho-L-threonyl-[protein] + ADP + H(+). Serine/threonine-protein kinase which is required for checkpoint-mediated cell cycle arrest and activation of DNA repair in response to the presence of DNA damage or unreplicated DNA. May also negatively regulate cell cycle progression during unperturbed cell cycles. May phosphorylate the CDC25 phosphatase stg, which promotes its degradation. This results in increased inhibitory tyrosine phosphorylation of Cdk1-cyclin complexes and consequent inhibition of cell cycle progression. This is Serine/threonine-protein kinase grp from Drosophila melanogaster (Fruit fly).